Here is a 277-residue protein sequence, read N- to C-terminus: Anamorsin homolog 2 (277 aa).

Residues 1 to 141 (MDTQPIVLVI…RKPAWDTGSS (141 aa)) form an N-terminal SAM-like domain region. Residues 141–186 (SFKLKKKVAQKPANVVTFDIPAFKVQLGDDLDDLIDEDSLLTEEDL) form a linker region. [2Fe-2S] cluster-binding residues include Cys197, Cys207, Cys210, and Cys212. Residues 197-212 (CEVGKAGRKACKNCTC) form a fe-S binding site A region. Residues Cys238, Cys241, Cys249, and Cys252 each contribute to the [4Fe-4S] cluster site. 2 short sequence motifs (cx2C motif) span residues 238–241 (CGSC) and 249–252 (CSTC). The tract at residues 238 to 252 (CGSCGLGDAFRCSTC) is fe-S binding site B.

It belongs to the anamorsin family. Monomer. The cofactor is [2Fe-2S] cluster. [4Fe-4S] cluster serves as cofactor.

It localises to the cytoplasm. It is found in the mitochondrion intermembrane space. In terms of biological role, component of the cytosolic iron-sulfur (Fe-S) protein assembly (CIA) machinery. Required for the maturation of extramitochondrial Fe-S proteins. Part of an electron transfer chain functioning in an early step of cytosolic Fe-S biogenesis, facilitating the de novo assembly of a [4Fe-4S] cluster on the cytosolic Fe-S scaffold complex. Electrons are transferred from NADPH via a FAD- and FMN-containing diflavin oxidoreductase. Together with the diflavin oxidoreductase, also required for the assembly of the diferric tyrosyl radical cofactor of ribonucleotide reductase (RNR), probably by providing electrons for reduction during radical cofactor maturation in the catalytic small subunit. This is Anamorsin homolog 2 from Picea sitchensis (Sitka spruce).